The following is a 952-amino-acid chain: uncharacterized protein (952 aa).

The CheB-type methylesterase domain maps to 1–141 (MASLLARHTK…PWIADYLIRR (141 aa)). Positions 168-440 (VGQFDGLEPA…SARHRIWQAL (273 aa)) constitute a CheR-type methyltransferase domain. A compositionally biased stretch (polar residues) spans 923–935 (HNQTEASPETSSG). The disordered stretch occupies residues 923 to 952 (HNQTEASPETSSGGLPGSDGTGADGGAPRA). The segment covering 936-952 (GLPGSDGTGADGGAPRA) has biased composition (gly residues).

This is an uncharacterized protein from Rhodobacter capsulatus (Rhodopseudomonas capsulata).